The sequence spans 142 residues: ATP synthase epsilon chain (142 aa).

This sequence belongs to the ATPase epsilon chain family. In terms of assembly, F-type ATPases have 2 components, CF(1) - the catalytic core - and CF(0) - the membrane proton channel. CF(1) has five subunits: alpha(3), beta(3), gamma(1), delta(1), epsilon(1). CF(0) has three main subunits: a, b and c.

The protein resides in the cell membrane. Produces ATP from ADP in the presence of a proton gradient across the membrane. The chain is ATP synthase epsilon chain from Lactiplantibacillus plantarum (strain ATCC BAA-793 / NCIMB 8826 / WCFS1) (Lactobacillus plantarum).